A 309-amino-acid chain; its full sequence is MDAFQSILKFFLNQKTAIGYSFMALLTVGSERLFSLVAFKCPCSVENTAYGLVFLFAPAWVLLILGFFLNNKAWRLFTGCCMNPKKIFPRRRCCRFFYVLGHIILSSLVAPVMWLSVALLNGTFYECAMSGTRSTRLLEMICKGKPKECWEELHKVSCGKSSMAAMESEEVRLSLQAQSQILGWCLICSASFLSLLTTCYARCRSKVSYLQLSFWKTYAQREKEQLENKLLECANKLSERNLKCFFENKKPDPFPMPSFGAWEAASELHSFHQDREHYSTLHKVVDDGMEQTPQEEETTMILVGTAQSL.

The Cytoplasmic portion of the chain corresponds to Met-1 to Lys-15. Residues Thr-16 to Val-37 traverse the membrane as a helical segment. Residues Arg-32 and Val-37 each coordinate a 1,2-diacyl-sn-glycero-3-phosphate. The Extracellular segment spans residues Ala-38–Val-45. Intrachain disulfides connect Cys-41–Cys-127, Cys-43–Cys-158, and Cys-142–Cys-149. Residues Glu-46–Asn-70 traverse the membrane as a helical segment. Residues Asn-71–Val-99 are Cytoplasmic-facing. The chain crosses the membrane as a helical span at residues Leu-100–Met-129. Asn-121 is a binding site for a 1,2-diacyl-sn-glycero-3-phosphate. Residues Ser-130–Ser-174 are Extracellular-facing. The chain crosses the membrane as a helical span at residues Leu-175–Tyr-200. Topologically, residues Ala-201–Leu-309 are cytoplasmic. Arg-202 is an a 1,2-diacyl-sn-glycero-3-phosphate binding site.

The protein belongs to the CALHM family. Oligomerizes to form undecameric cone-shaped channels.

The protein resides in the membrane. Functionally, may assemble to form large pore channels with gating and ion conductance likely regulated by membrane lipids. The sequence is that of Calcium homeostasis modulator protein 5 from Mus musculus (Mouse).